A 924-amino-acid polypeptide reads, in one-letter code: Probable dipeptidyl-aminopeptidase B (924 aa).

The segment at 1 to 104 (MPPFTYSDDT…DQRSPGDGQR (104 aa)) is disordered. Topologically, residues 1–111 (MPPFTYSDDT…GQRMDRSLRR (111 aa)) are cytoplasmic. The segment covering 9–23 (DTLRSGRDRFRDHSP) has biased composition (basic and acidic residues). Polar residues predominate over residues 31-43 (SQETDSSASTTSI). 2 stretches are compositionally biased toward basic and acidic residues: residues 47–58 (RIQERLDTKEFT) and 92–104 (SRSDQRSPGDGQR). The helical; Signal-anchor for type II membrane protein transmembrane segment at 112 to 132 (WLFIVSGVLVATWVIGLFVFV) threads the bilayer. The Vacuolar portion of the chain corresponds to 133–924 (SSKAYKPSSS…GMKKRAAPTA (792 aa)). 2 N-linked (GlcNAc...) asparagine glycosylation sites follow: asparagine 231 and asparagine 364. Serine 768 acts as the Charge relay system in catalysis. N-linked (GlcNAc...) asparagine glycosylation is present at asparagine 827. Active-site charge relay system residues include aspartate 845 and histidine 878.

It belongs to the peptidase S9B family.

Its subcellular location is the vacuole membrane. It catalyses the reaction Release of an N-terminal dipeptide, Xaa-Yaa-|-Zaa-, from a polypeptide, preferentially when Yaa is Pro, provided Zaa is neither Pro nor hydroxyproline.. Its function is as follows. Type IV dipeptidyl-peptidase which removes N-terminal dipeptides sequentially from polypeptides having unsubstituted N-termini provided that the penultimate residue is proline. The sequence is that of Probable dipeptidyl-aminopeptidase B (DAPB) from Sordaria macrospora (strain ATCC MYA-333 / DSM 997 / K(L3346) / K-hell).